Consider the following 226-residue polypeptide: RING-H2 finger protein ATL75 (226 aa).

A helical transmembrane segment spans residues 60–80; it reads LMLLSVLICGIICCLGLHYII. The RING-type; atypical zinc-finger motif lies at 136–178; that stretch reads CVICLSDFVSGEQIRMLPKCHHGFHVRCIDKWLQQHLTCPKCR.

It belongs to the RING-type zinc finger family. ATL subfamily.

It localises to the membrane. It catalyses the reaction S-ubiquitinyl-[E2 ubiquitin-conjugating enzyme]-L-cysteine + [acceptor protein]-L-lysine = [E2 ubiquitin-conjugating enzyme]-L-cysteine + N(6)-ubiquitinyl-[acceptor protein]-L-lysine.. The protein operates within protein modification; protein ubiquitination. This Arabidopsis thaliana (Mouse-ear cress) protein is RING-H2 finger protein ATL75 (ATL75).